Here is a 181-residue protein sequence, read N- to C-terminus: Oligoribonuclease (181 aa).

An Exonuclease domain is found at 8 to 171 (LIWVDLEMTG…DDIHDSIAEL (164 aa)). Tyr129 is a catalytic residue.

This sequence belongs to the oligoribonuclease family.

The protein resides in the cytoplasm. In terms of biological role, 3'-to-5' exoribonuclease specific for small oligoribonucleotides. This Photobacterium profundum (strain SS9) protein is Oligoribonuclease.